We begin with the raw amino-acid sequence, 203 residues long: MPPTHNEFMRTDVPMQPMYEQTAQRLLRQRIVFLGQQVDDEIANRIVGELLLLSAEDRERDITLYINSPGGSVTAGMAIYDVMQYIPNDVRTVGIGLAASMGQMLLCAGTRGKRYALPHTRIMMHQPSGGIGGTASDIRILADQLLYVKKMFLERISLHTGQPVEQIEKDADRDRWFTAQEALEYGFIDEVLTNTPDVTGGRS.

Serine 100 serves as the catalytic Nucleophile. Histidine 125 is a catalytic residue.

Belongs to the peptidase S14 family. In terms of assembly, fourteen ClpP subunits assemble into 2 heptameric rings which stack back to back to give a disk-like structure with a central cavity, resembling the structure of eukaryotic proteasomes.

It is found in the cytoplasm. It catalyses the reaction Hydrolysis of proteins to small peptides in the presence of ATP and magnesium. alpha-casein is the usual test substrate. In the absence of ATP, only oligopeptides shorter than five residues are hydrolyzed (such as succinyl-Leu-Tyr-|-NHMec, and Leu-Tyr-Leu-|-Tyr-Trp, in which cleavage of the -Tyr-|-Leu- and -Tyr-|-Trp bonds also occurs).. Functionally, cleaves peptides in various proteins in a process that requires ATP hydrolysis. Has a chymotrypsin-like activity. Plays a major role in the degradation of misfolded proteins. The chain is ATP-dependent Clp protease proteolytic subunit 2 from Thermobifida fusca (strain YX).